The following is a 165-amino-acid chain: uncharacterized protein (165 aa).

Residues 15 to 35 (MSPAIILIGVLILIVLFVIKF) form a helical membrane-spanning segment. Residues 67 to 119 (ISQLNTLRATLAAKKKELKTLRTARKKECTEQLAKTQAEVDRIQAKIDNFSSR) adopt a coiled-coil conformation. Positions 123-156 (VPLPGGEVGPPYNPPPPRTNTRPNPRPNPRPAQL) are disordered. Residues 133–154 (PYNPPPPRTNTRPNPRPNPRPA) are compositionally biased toward pro residues.

The protein localises to the membrane. This is an uncharacterized protein from Acheta domesticus (House cricket).